We begin with the raw amino-acid sequence, 220 residues long: Uracil-DNA glycosylase (220 aa).

Residue Asp-65 is the Proton acceptor of the active site.

Belongs to the uracil-DNA glycosylase (UDG) superfamily. UNG family.

The protein resides in the cytoplasm. The catalysed reaction is Hydrolyzes single-stranded DNA or mismatched double-stranded DNA and polynucleotides, releasing free uracil.. Functionally, excises uracil residues from the DNA which can arise as a result of misincorporation of dUMP residues by DNA polymerase or due to deamination of cytosine. In Phocaeicola vulgatus (strain ATCC 8482 / DSM 1447 / JCM 5826 / CCUG 4940 / NBRC 14291 / NCTC 11154) (Bacteroides vulgatus), this protein is Uracil-DNA glycosylase.